A 282-amino-acid chain; its full sequence is tRNA uridine(34) hydroxylase (282 aa).

One can recognise a Rhodanese domain in the interval 128 to 222; it reads EGRPVVMLDT…YFEEVGGSHY (95 aa). Cysteine 182 functions as the Cysteine persulfide intermediate in the catalytic mechanism.

The protein belongs to the TrhO family.

The enzyme catalyses uridine(34) in tRNA + AH2 + O2 = 5-hydroxyuridine(34) in tRNA + A + H2O. Catalyzes oxygen-dependent 5-hydroxyuridine (ho5U) modification at position 34 in tRNAs. The sequence is that of tRNA uridine(34) hydroxylase from Cupriavidus necator (strain ATCC 17699 / DSM 428 / KCTC 22496 / NCIMB 10442 / H16 / Stanier 337) (Ralstonia eutropha).